The sequence spans 281 residues: Undecaprenyl-diphosphatase (281 aa).

A run of 8 helical transmembrane segments spans residues 5–25 (LFVL…FLPI), 48–68 (VKMY…LLYW), 92–112 (FWFM…LLDA), 118–138 (LMTP…MIYA), 154–174 (VTPK…IPGM), 192–212 (VVAA…YSLL), 226–246 (AELI…VAVI), and 261–281 (FAIY…MGFF).

Belongs to the UppP family.

Its subcellular location is the cell membrane. The enzyme catalyses di-trans,octa-cis-undecaprenyl diphosphate + H2O = di-trans,octa-cis-undecaprenyl phosphate + phosphate + H(+). Functionally, catalyzes the dephosphorylation of undecaprenyl diphosphate (UPP). Confers resistance to bacitracin. The chain is Undecaprenyl-diphosphatase from Ruminiclostridium cellulolyticum (strain ATCC 35319 / DSM 5812 / JCM 6584 / H10) (Clostridium cellulolyticum).